A 161-amino-acid polypeptide reads, in one-letter code: NAD(P)H-quinone oxidoreductase subunit I, chloroplastic (161 aa).

4Fe-4S ferredoxin-type domains lie at 55–84 and 95–124; these read GRIHFEFDKCIACEVCVRVCPIDLPVVDWK and LNYSIDFGICIFCGNCIEYCPTNCLSMTEE. Positions 64, 67, 70, 74, 104, 107, 110, and 114 each coordinate [4Fe-4S] cluster.

This sequence belongs to the complex I 23 kDa subunit family. As to quaternary structure, NDH is composed of at least 16 different subunits, 5 of which are encoded in the nucleus. [4Fe-4S] cluster serves as cofactor.

The protein resides in the plastid. Its subcellular location is the chloroplast thylakoid membrane. It carries out the reaction a plastoquinone + NADH + (n+1) H(+)(in) = a plastoquinol + NAD(+) + n H(+)(out). The catalysed reaction is a plastoquinone + NADPH + (n+1) H(+)(in) = a plastoquinol + NADP(+) + n H(+)(out). Its function is as follows. NDH shuttles electrons from NAD(P)H:plastoquinone, via FMN and iron-sulfur (Fe-S) centers, to quinones in the photosynthetic chain and possibly in a chloroplast respiratory chain. The immediate electron acceptor for the enzyme in this species is believed to be plastoquinone. Couples the redox reaction to proton translocation, and thus conserves the redox energy in a proton gradient. This Lotus japonicus (Lotus corniculatus var. japonicus) protein is NAD(P)H-quinone oxidoreductase subunit I, chloroplastic.